Reading from the N-terminus, the 968-residue chain is Translation initiation factor IF-2 (968 aa).

The span at 305–319 shows a compositional bias: low complexity; sequence KPAAAAGAPGAPGAA. Positions 305 to 376 are disordered; sequence KPAAAAGAPG…NDRDARPEST (72 aa). The 168-residue stretch at 468-635 folds into the tr-type G domain; the sequence is PRAPVVTVMG…QVLLQAEVLE (168 aa). Positions 477–484 are G1; the sequence is GHVDHGKT. Position 477-484 (477-484) interacts with GTP; sequence GHVDHGKT. The G2 stretch occupies residues 502 to 506; sequence GITQH. A G3 region spans residues 523–526; that stretch reads DTPG. GTP contacts are provided by residues 523-527 and 577-580; these read DTPGH and NKID. Residues 577 to 580 are G4; sequence NKID. A G5 region spans residues 613–615; that stretch reads SAR.

The protein belongs to the TRAFAC class translation factor GTPase superfamily. Classic translation factor GTPase family. IF-2 subfamily.

The protein localises to the cytoplasm. One of the essential components for the initiation of protein synthesis. Protects formylmethionyl-tRNA from spontaneous hydrolysis and promotes its binding to the 30S ribosomal subunits. Also involved in the hydrolysis of GTP during the formation of the 70S ribosomal complex. In Polaromonas sp. (strain JS666 / ATCC BAA-500), this protein is Translation initiation factor IF-2.